The chain runs to 134 residues: Large ribosomal subunit protein mL41 (134 aa).

The N-terminal 13 residues, 1–13 (MGFLTAVTQGLVR), are a transit peptide targeting the mitochondrion.

This sequence belongs to the mitochondrion-specific ribosomal protein mL41 family. Component of the mitochondrial ribosome large subunit (39S) which comprises a 16S rRNA and about 50 distinct proteins. Interacts with BCL2. Was also identified in the 28S mitochondrial ribosome.

It localises to the mitochondrion. Its function is as follows. Component of the mitochondrial ribosome large subunit. Also involved in apoptosis and cell cycle. Enhances p53/TP53 stability, thereby contributing to p53/TP53-induced apoptosis in response to growth-inhibitory condition. Enhances p53/TP53 translocation to the mitochondria. Has the ability to arrest the cell cycle at the G1 phase, possibly by stabilizing the CDKN1A and CDKN1B (p27Kip1) proteins. This chain is Large ribosomal subunit protein mL41 (Mrpl41), found in Rattus norvegicus (Rat).